We begin with the raw amino-acid sequence, 518 residues long: 2-isopropylmalate synthase (518 aa).

One can recognise a Pyruvate carboxyltransferase domain in the interval 5–267 (VIIFDTTLRD…STKIKHKEIY (263 aa)). Positions 14, 202, 204, and 238 each coordinate Mn(2+). Residues 392–518 (SLSFFSVQSI…KLKKLKKINN (127 aa)) are regulatory domain.

The protein belongs to the alpha-IPM synthase/homocitrate synthase family. LeuA type 1 subfamily. As to quaternary structure, homodimer. Mn(2+) is required as a cofactor.

It localises to the cytoplasm. It carries out the reaction 3-methyl-2-oxobutanoate + acetyl-CoA + H2O = (2S)-2-isopropylmalate + CoA + H(+). The protein operates within amino-acid biosynthesis; L-leucine biosynthesis; L-leucine from 3-methyl-2-oxobutanoate: step 1/4. In terms of biological role, catalyzes the condensation of the acetyl group of acetyl-CoA with 3-methyl-2-oxobutanoate (2-ketoisovalerate) to form 3-carboxy-3-hydroxy-4-methylpentanoate (2-isopropylmalate). The polypeptide is 2-isopropylmalate synthase (Buchnera aphidicola subsp. Rhopalosiphum padi).